A 212-amino-acid chain; its full sequence is ATP phosphoribosyltransferase (212 aa).

Belongs to the ATP phosphoribosyltransferase family. Short subfamily. As to quaternary structure, heteromultimer composed of HisG and HisZ subunits.

It is found in the cytoplasm. The catalysed reaction is 1-(5-phospho-beta-D-ribosyl)-ATP + diphosphate = 5-phospho-alpha-D-ribose 1-diphosphate + ATP. The protein operates within amino-acid biosynthesis; L-histidine biosynthesis; L-histidine from 5-phospho-alpha-D-ribose 1-diphosphate: step 1/9. In terms of biological role, catalyzes the condensation of ATP and 5-phosphoribose 1-diphosphate to form N'-(5'-phosphoribosyl)-ATP (PR-ATP). Has a crucial role in the pathway because the rate of histidine biosynthesis seems to be controlled primarily by regulation of HisG enzymatic activity. The polypeptide is ATP phosphoribosyltransferase (hisG) (Halalkalibacterium halodurans (strain ATCC BAA-125 / DSM 18197 / FERM 7344 / JCM 9153 / C-125) (Bacillus halodurans)).